The sequence spans 151 residues: MSTMPPASSGWIRKMQLGQQYMKTWPIEKQLAPMFPENRIIKATRFGIRFMPPLAIFTLTWQIALGGQLGPAVATALFACSLPMQGLWWLGKRASTPLPATLLKWFHEIRDKFAEAGIAMAPVRQTPTYQSLAELLKLAFKQLDRSFLDDI.

2 helical membrane passes run 46–65 (FGIR…QIAL) and 69–91 (LGPA…WWLG).

Belongs to the UPF0208 family.

The protein resides in the cell inner membrane. The chain is UPF0208 membrane protein YfbV (yfbV) from Photorhabdus temperata.